The following is a 498-amino-acid chain: ATP synthase subunit beta, chloroplastic (498 aa).

Residue threonine 6 is modified to Phosphothreonine. Phosphoserine is present on serine 13. Position 172–179 (172–179) interacts with ATP; it reads GGAGVGKT.

The protein belongs to the ATPase alpha/beta chains family. As to quaternary structure, F-type ATPases have 2 components, CF(1) - the catalytic core - and CF(0) - the membrane proton channel. CF(1) has five subunits: alpha(3), beta(3), gamma(1), delta(1), epsilon(1). CF(0) has four main subunits: a(1), b(1), b'(1) and c(9-12).

The protein localises to the plastid. Its subcellular location is the chloroplast thylakoid membrane. It carries out the reaction ATP + H2O + 4 H(+)(in) = ADP + phosphate + 5 H(+)(out). Produces ATP from ADP in the presence of a proton gradient across the membrane. The catalytic sites are hosted primarily by the beta subunits. The polypeptide is ATP synthase subunit beta, chloroplastic (Barbarea verna (Land cress)).